Here is a 257-residue protein sequence, read N- to C-terminus: Imidazole glycerol phosphate synthase subunit HisF (257 aa).

Active-site residues include D11 and D130.

This sequence belongs to the HisA/HisF family. Heterodimer of HisH and HisF.

It localises to the cytoplasm. It carries out the reaction 5-[(5-phospho-1-deoxy-D-ribulos-1-ylimino)methylamino]-1-(5-phospho-beta-D-ribosyl)imidazole-4-carboxamide + L-glutamine = D-erythro-1-(imidazol-4-yl)glycerol 3-phosphate + 5-amino-1-(5-phospho-beta-D-ribosyl)imidazole-4-carboxamide + L-glutamate + H(+). Its pathway is amino-acid biosynthesis; L-histidine biosynthesis; L-histidine from 5-phospho-alpha-D-ribose 1-diphosphate: step 5/9. Functionally, IGPS catalyzes the conversion of PRFAR and glutamine to IGP, AICAR and glutamate. The HisF subunit catalyzes the cyclization activity that produces IGP and AICAR from PRFAR using the ammonia provided by the HisH subunit. The chain is Imidazole glycerol phosphate synthase subunit HisF from Aliivibrio salmonicida (strain LFI1238) (Vibrio salmonicida (strain LFI1238)).